Consider the following 253-residue polypeptide: uncharacterized protein (253 aa).

This is an uncharacterized protein from Haemophilus influenzae (strain ATCC 51907 / DSM 11121 / KW20 / Rd).